Here is a 214-residue protein sequence, read N- to C-terminus: 14-3-3 protein homolog 2 (214 aa).

Belongs to the 14-3-3 family.

This is 14-3-3 protein homolog 2 from Schistosoma mansoni (Blood fluke).